The sequence spans 180 residues: Ribosome-recycling factor (180 aa).

Positions 135–156 (SDLKKDNDLSEDSRHRTEDDIQ) are disordered.

The protein belongs to the RRF family.

The protein localises to the cytoplasm. Responsible for the release of ribosomes from messenger RNA at the termination of protein biosynthesis. May increase the efficiency of translation by recycling ribosomes from one round of translation to another. This Oenococcus oeni (strain ATCC BAA-331 / PSU-1) protein is Ribosome-recycling factor.